The sequence spans 529 residues: Phosphoenolpyruvate carboxykinase (ATP) (529 aa).

3 residues coordinate substrate: R60, Y195, and K201. ATP-binding positions include K201, H220, and 236 to 244; that span reads GLSGTGKTT. K201 and H220 together coordinate Mn(2+). Mn(2+) is bound at residue D257. Positions 285, 323, and 448 each coordinate ATP. Substrate is bound at residue R323.

The protein belongs to the phosphoenolpyruvate carboxykinase (ATP) family. Mn(2+) is required as a cofactor.

The protein localises to the cytoplasm. It catalyses the reaction oxaloacetate + ATP = phosphoenolpyruvate + ADP + CO2. It functions in the pathway carbohydrate biosynthesis; gluconeogenesis. Its function is as follows. Involved in the gluconeogenesis. Catalyzes the conversion of oxaloacetate (OAA) to phosphoenolpyruvate (PEP) through direct phosphoryl transfer between the nucleoside triphosphate and OAA. This is Phosphoenolpyruvate carboxykinase (ATP) from Geobacter sp. (strain M21).